The sequence spans 181 residues: ATP synthase subunit delta (181 aa).

This sequence belongs to the ATPase delta chain family. As to quaternary structure, F-type ATPases have 2 components, F(1) - the catalytic core - and F(0) - the membrane proton channel. F(1) has five subunits: alpha(3), beta(3), gamma(1), delta(1), epsilon(1). F(0) has three main subunits: a(1), b(2) and c(10-14). The alpha and beta chains form an alternating ring which encloses part of the gamma chain. F(1) is attached to F(0) by a central stalk formed by the gamma and epsilon chains, while a peripheral stalk is formed by the delta and b chains.

It is found in the cell membrane. Its function is as follows. F(1)F(0) ATP synthase produces ATP from ADP in the presence of a proton or sodium gradient. F-type ATPases consist of two structural domains, F(1) containing the extramembraneous catalytic core and F(0) containing the membrane proton channel, linked together by a central stalk and a peripheral stalk. During catalysis, ATP synthesis in the catalytic domain of F(1) is coupled via a rotary mechanism of the central stalk subunits to proton translocation. Functionally, this protein is part of the stalk that links CF(0) to CF(1). It either transmits conformational changes from CF(0) to CF(1) or is implicated in proton conduction. The sequence is that of ATP synthase subunit delta from Clostridium kluyveri (strain NBRC 12016).